The chain runs to 184 residues: Holliday junction branch migration complex subunit RuvA (184 aa).

The interval 1-64 is domain I; that stretch reads MIVAVEGIIT…EDADLLYGFL (64 aa). The tract at residues 65 to 145 is domain II; sequence DEKEKRMFEM…ANDGEQYKIE (81 aa). Glutamate 145 is a region of interest (flexible linker). The domain III stretch occupies residues 145–184; sequence ETISALENLGFKRDKINKILLNCKSTNTADLIKEALKKLA.

Belongs to the RuvA family. As to quaternary structure, homotetramer. Forms an RuvA(8)-RuvB(12)-Holliday junction (HJ) complex. HJ DNA is sandwiched between 2 RuvA tetramers; dsDNA enters through RuvA and exits via RuvB. An RuvB hexamer assembles on each DNA strand where it exits the tetramer. Each RuvB hexamer is contacted by two RuvA subunits (via domain III) on 2 adjacent RuvB subunits; this complex drives branch migration. In the full resolvosome a probable DNA-RuvA(4)-RuvB(12)-RuvC(2) complex forms which resolves the HJ.

The protein resides in the cytoplasm. Functionally, the RuvA-RuvB-RuvC complex processes Holliday junction (HJ) DNA during genetic recombination and DNA repair, while the RuvA-RuvB complex plays an important role in the rescue of blocked DNA replication forks via replication fork reversal (RFR). RuvA specifically binds to HJ cruciform DNA, conferring on it an open structure. The RuvB hexamer acts as an ATP-dependent pump, pulling dsDNA into and through the RuvAB complex. HJ branch migration allows RuvC to scan DNA until it finds its consensus sequence, where it cleaves and resolves the cruciform DNA. The polypeptide is Holliday junction branch migration complex subunit RuvA (Campylobacter hominis (strain ATCC BAA-381 / DSM 21671 / CCUG 45161 / LMG 19568 / NCTC 13146 / CH001A)).